The following is a 294-amino-acid chain: uncharacterized protein (294 aa).

This is an uncharacterized protein from Bacillus subtilis (strain 168).